A 347-amino-acid polypeptide reads, in one-letter code: Heme A synthase (347 aa).

The next 8 membrane-spanning stretches (helical) occupy residues Val14–Ile34, Phe96–Met116, Phe129–Ser149, Leu162–Leu182, Val199–Gly219, Phe260–Leu280, Met287–Tyr307, and Ile311–Leu331. His262 contributes to the heme binding site. His317 provides a ligand contact to heme.

This sequence belongs to the COX15/CtaA family. Type 2 subfamily. Interacts with CtaB. Heme b is required as a cofactor.

The protein localises to the cell membrane. The catalysed reaction is Fe(II)-heme o + 2 A + H2O = Fe(II)-heme a + 2 AH2. The protein operates within porphyrin-containing compound metabolism; heme A biosynthesis; heme A from heme O: step 1/1. Catalyzes the conversion of heme O to heme A by two successive hydroxylations of the methyl group at C8. The first hydroxylation forms heme I, the second hydroxylation results in an unstable dihydroxymethyl group, which spontaneously dehydrates, resulting in the formyl group of heme A. This is Heme A synthase from Ehrlichia ruminantium (strain Welgevonden).